Reading from the N-terminus, the 93-residue chain is Putative septation protein SpoVG (93 aa).

Belongs to the SpoVG family.

Could be involved in septation. The polypeptide is Putative septation protein SpoVG (Treponema denticola (strain ATCC 35405 / DSM 14222 / CIP 103919 / JCM 8153 / KCTC 15104)).